A 480-amino-acid polypeptide reads, in one-letter code: MAGTRWVLGALLRGCGCNCSSCRRTGAACLPFYSAAGSIPSGVSGRRRLLLLLGAAAAAASQTRGLQTGPVPPGRLAGPPAVATSAAAAAAASYSALRASLLPQSLAAAAAVPTRSYSQESKTTYLEDLPPPPEYELAPSKLEEEVDDVFLIRAQGLPWSCTMEDVLNFFSDCRIRNGENGIHFLLNRDGKRRGDALIEMESEQDVQKALEKHRMYMGQRYVEVYEINNEDVDALMKSLQVKSSPVVNDGVVRLRGLPYSCNEKDIVDFFAGLNIVDITFVMDYRGRRKTGEAYVQFEEPEMANQALLKHREEIGNRYIEIFPSRRNEVRTHVGSYKGKKIASFPTAKYITEPEMVFEEHEVNEDIQPMTAFESEKEIELPKEVPEKLPEAADFGTTSSLHFVHMRGLPFQANAQDIINFFAPLKPVRITMEYSSSGKATGEADVHFETHEDAVAAMLKDRSHVHHRYIELFLNSCPKGK.

The N-terminal 117 residues, 1–117 (MAGTRWVLGA…AAAAVPTRSY (117 aa)), are a transit peptide targeting the mitochondrion. 2 consecutive RRM domains span residues 122–246 (KTTY…SSPV) and 250–326 (GVVR…PSRR). Residue Ser244 is modified to Phosphoserine. Ser335 is subject to Phosphoserine. Positions 401–480 (HFVHMRGLPF…LFLNSCPKGK (80 aa)) constitute an RRM 3 domain.

Monomer. Found in a complex with DDX28, DHX30, FASTKD2 and FASTKD5. Interacts with the mitochondrial RNase P complex subunit TRMT10C/MRPP1. Interacts with the 2 components of the mitochondrial degradosome complex, PNPT1 and SUPV3L1, in an RNA-dependent manner.

It localises to the mitochondrion matrix. Its subcellular location is the cytoplasm. Functionally, regulator of post-transcriptional mitochondrial gene expression, required for assembly of the mitochondrial ribosome and for recruitment of mRNA and lncRNA. Binds RNAs containing the 14 base G-rich element. Preferentially binds RNAs transcribed from three contiguous genes on the light strand of mtDNA, the ND6 mRNA, and the long non-coding RNAs for MT-CYB and MT-ND5, each of which contains multiple consensus binding sequences. Involved in the degradosome-mediated decay of non-coding mitochondrial transcripts (MT-ncRNA) and tRNA-like molecules. Acts by unwinding G-quadruplex RNA structures in MT-ncRNA, thus facilitating their degradation by the degradosome. G-quadruplexes (G4) are non-canonical 4 stranded structures formed by transcripts from the light strand of mtDNA. The chain is G-rich sequence factor 1 (GRSF1) from Homo sapiens (Human).